The sequence spans 354 residues: Peptide chain release factor 1 (354 aa).

Glutamine 230 is subject to N5-methylglutamine.

It belongs to the prokaryotic/mitochondrial release factor family. Methylated by PrmC. Methylation increases the termination efficiency of RF1.

Its subcellular location is the cytoplasm. Peptide chain release factor 1 directs the termination of translation in response to the peptide chain termination codons UAG and UAA. The sequence is that of Peptide chain release factor 1 from Leptospira interrogans serogroup Icterohaemorrhagiae serovar copenhageni (strain Fiocruz L1-130).